The following is a 1111-amino-acid chain: Zinc finger protein GLI1 (1111 aa).

Positions 52 to 78 are disordered; it reads GYGAARETSSCTEGSLFPPPPPPRSSV. The tract at residues 123–127 is interaction with SUFU; sequence SYGHL. 5 consecutive C2H2-type zinc fingers follow at residues 238-263, 271-298, 304-328, 334-359, and 365-390; these read TDCRWDGCSQEFDSQEQLVHHINSEH, FVCHWGGCSRELRPFKAQYMLVVHMRRH, HKCTFEGCRKSYSRLENLKTHLRSH, YMCEQEGCSKAFSNASDRAKHQNRTH, and YVCKLPGCTKRYTDPSSLRKHVKTVH. The segment at 286-294 is interaction with DNA; it reads KAQYMLVVH. Interaction with DNA stretches follow at residues 348–353 and 378–384; these read ASDRAK and DPSSLRK. The tract at residues 378 to 487 is disordered; it reads DPSSLRKHVK…EDLSSLDEGP (110 aa). Positions 416-431 are enriched in basic and acidic residues; it reads EPKREREGGSGREESR. Polar residues predominate over residues 439–465; sequence MPQQSPGAQSSCSSDHSPAGSAANTDS. Position 520 is an N6-acetyllysine (Lys520). Disordered regions lie at residues 528–583, 598–649, 673–692, and 832–891; these read GAPV…LPGL, ARGS…RAAD, TGRNFDPHHPTSVYSPQPPS, and PCLN…SSHS. The span at 546–562 shows a compositional bias: low complexity; it reads SSSSSMSSAYTVSRRSS. Positions 640 to 649 are enriched in basic and acidic residues; it reads RASDPARAAD. The span at 855-870 shows a compositional bias: pro residues; the sequence is LPQPQYPQSGPYPQPP. Residue Lys1008 forms a Glycyl lysine isopeptide (Lys-Gly) (interchain with G-Cter in SUMO2) linkage. The segment at 1064-1093 is disordered; that stretch reads LSPPLSHEQGDSSKNTPSPSGPPNMAVGNM.

The protein belongs to the GLI C2H2-type zinc-finger protein family. Interacts with KIF7. Interacts with STK36. Interacts with ZIC1; the interaction enhances transcription activation. Interacts with SUFU; this inhibits transcriptional activation by GLI1. Phosphorylated in vitro by ULK3. In terms of processing, acetylation at Lys-520 down-regulates transcriptional activity. Deacetylated by HDAC1. Post-translationally, ubiquitinated by the CRL2(FEM1B) complex, suppressing GLI1 transcriptional activator activity.

Its subcellular location is the cytoplasm. It is found in the nucleus. In terms of biological role, acts as a transcriptional activator. Binds to the DNA consensus sequence 5'-GACCACCCA-3'. Regulates the transcription of specific genes during normal development. Plays a role in craniofacial development and digital development, as well as development of the central nervous system and gastrointestinal tract. Mediates SHH signaling. Plays a role in cell proliferation and differentiation via its role in SHH signaling. This Mus musculus (Mouse) protein is Zinc finger protein GLI1 (Gli1).